We begin with the raw amino-acid sequence, 252 residues long: uncharacterized protein (252 aa).

An ABC transporter domain is found at 13 to 247 (ITLENVNKWY…PKSERTRAFL (235 aa)). 45–52 (GPSGSGKS) is an ATP binding site.

This sequence belongs to the ABC transporter superfamily.

Its subcellular location is the cell inner membrane. Probably part of a binding-protein-dependent transport system YdhWXYZ for an amino acid. Probably responsible for energy coupling to the transport system. This is an uncharacterized protein from Escherichia coli (strain K12).